A 571-amino-acid chain; its full sequence is Sulfite reductase [NADPH] hemoprotein beta-component (571 aa).

[4Fe-4S] cluster-binding residues include Cys435, Cys441, Cys480, and Cys484. Cys484 is a siroheme binding site.

It belongs to the nitrite and sulfite reductase 4Fe-4S domain family. As to quaternary structure, alpha(8)-beta(8). The alpha component is a flavoprotein, the beta component is a hemoprotein. It depends on siroheme as a cofactor. Requires [4Fe-4S] cluster as cofactor.

The catalysed reaction is hydrogen sulfide + 3 NADP(+) + 3 H2O = sulfite + 3 NADPH + 4 H(+). Its pathway is sulfur metabolism; hydrogen sulfide biosynthesis; hydrogen sulfide from sulfite (NADPH route): step 1/1. Its function is as follows. Component of the sulfite reductase complex that catalyzes the 6-electron reduction of sulfite to sulfide. This is one of several activities required for the biosynthesis of L-cysteine from sulfate. This Serratia proteamaculans (strain 568) protein is Sulfite reductase [NADPH] hemoprotein beta-component.